Reading from the N-terminus, the 153-residue chain is Small ribosomal subunit protein uS13 (153 aa).

The protein belongs to the universal ribosomal protein uS13 family. In terms of assembly, part of the 30S ribosomal subunit. Forms a loose heterodimer with protein S19. Forms two bridges to the 50S subunit in the 70S ribosome.

Functionally, located at the top of the head of the 30S subunit, it contacts several helices of the 16S rRNA. In the 70S ribosome it contacts the 23S rRNA (bridge B1a) and protein L5 of the 50S subunit (bridge B1b), connecting the 2 subunits; these bridges are implicated in subunit movement. In Pyrobaculum islandicum (strain DSM 4184 / JCM 9189 / GEO3), this protein is Small ribosomal subunit protein uS13.